The primary structure comprises 569 residues: Dihydroxy-acid dehydratase (569 aa).

Cys61 provides a ligand contact to [2Fe-2S] cluster. Position 93 (Asp93) interacts with Mg(2+). Residue Cys134 participates in [2Fe-2S] cluster binding. Mg(2+) is bound by residues Asp135 and Lys136. Residue Lys136 is modified to N6-carboxylysine. Residue Cys211 coordinates [2Fe-2S] cluster. Mg(2+) is bound at residue Glu462. Catalysis depends on Ser488, which acts as the Proton acceptor.

It belongs to the IlvD/Edd family. In terms of assembly, homodimer. Requires [2Fe-2S] cluster as cofactor. The cofactor is Mg(2+).

It carries out the reaction (2R)-2,3-dihydroxy-3-methylbutanoate = 3-methyl-2-oxobutanoate + H2O. The enzyme catalyses (2R,3R)-2,3-dihydroxy-3-methylpentanoate = (S)-3-methyl-2-oxopentanoate + H2O. The protein operates within amino-acid biosynthesis; L-isoleucine biosynthesis; L-isoleucine from 2-oxobutanoate: step 3/4. It participates in amino-acid biosynthesis; L-valine biosynthesis; L-valine from pyruvate: step 3/4. Its function is as follows. Functions in the biosynthesis of branched-chain amino acids. Catalyzes the dehydration of (2R,3R)-2,3-dihydroxy-3-methylpentanoate (2,3-dihydroxy-3-methylvalerate) into 2-oxo-3-methylpentanoate (2-oxo-3-methylvalerate) and of (2R)-2,3-dihydroxy-3-methylbutanoate (2,3-dihydroxyisovalerate) into 2-oxo-3-methylbutanoate (2-oxoisovalerate), the penultimate precursor to L-isoleucine and L-valine, respectively. This chain is Dihydroxy-acid dehydratase, found in Tropheryma whipplei (strain TW08/27) (Whipple's bacillus).